Here is a 557-residue protein sequence, read N- to C-terminus: Putative sensory transducer protein (557 aa).

Residues 122 to 145 traverse the membrane as a helical segment; it reads TASTVMIVVIFVGILIAIALGVFI. The region spanning 147 to 199 is the HAMP domain; the sequence is RIISKPIGQMVEAADRLALGDVEVDVKAETRDEIGKLAESFKRMIENIREQAY. The region spanning 243-472 is the Methyl-accepting transducer domain; it reads VAAQVAAGAK…ESAAASEELS (230 aa). Glutamine 268 carries the post-translational modification Glutamate methyl ester (Gln). Glutamate 274 carries the glutamate methyl ester (Glu) modification. Glutamine 281 carries the glutamate methyl ester (Gln) modification. The residue at position 463 (glutamate 463) is a Glutamate methyl ester (Glu). The segment covering 511 to 541 has biased composition (basic and acidic residues); sequence DYTENKQPKSYSKEENGEYSDGKETAEKDVG. Residues 511–542 form a disordered region; that stretch reads DYTENKQPKSYSKEENGEYSDGKETAEKDVGG.

It belongs to the methyl-accepting chemotaxis (MCP) protein family.

It is found in the cell membrane. Its function is as follows. May bind attractants or detect changes in the extracellular concentration of soluble sugars. The chain is Putative sensory transducer protein from Acetivibrio thermocellus (strain ATCC 27405 / DSM 1237 / JCM 9322 / NBRC 103400 / NCIMB 10682 / NRRL B-4536 / VPI 7372) (Clostridium thermocellum).